Reading from the N-terminus, the 285-residue chain is Putative hydrolase DDAH2 (285 aa).

His-171 serves as the catalytic Proton donor. Residue Cys-276 is the Nucleophile of the active site.

It belongs to the DDAH family. Post-translationally, phosphorylated by TBK1. Phosphorylation inhibits the translocation into the mitochondrion upon Sendai viral infection. As to expression, detected in heart, placenta, lung, liver, skeletal muscle, kidney and pancreas, and at very low levels in brain.

It localises to the cytoplasm. Its subcellular location is the mitochondrion. In terms of biological role, putative hydrolase with unknown substrate. Does not hydrolyze N(G),N(G)-dimethyl-L-arginine (ADMA) which acts as an inhibitor of NOS. In endothelial cells, induces expression of vascular endothelial growth factor (VEGF) via phosphorylation of the transcription factor SP1 by PKA in a process that is independent of NO and NO synthase. Similarly, enhances pancreatic insulin secretion through SP1-mediated transcriptional up-regulation of secretagogin/SCGN, an insulin vesicle docking protein. Upon viral infection, relocates to mitochondria where it promotes mitochondrial fission through activation of DNM1L leading to the inhibition of innate response activation mediated by MAVS. The sequence is that of Putative hydrolase DDAH2 from Homo sapiens (Human).